Reading from the N-terminus, the 1488-residue chain is Phenolphthiocerol/phthiocerol polyketide synthase subunit E (1488 aa).

Residues 5–438 enclose the Ketosynthase family 3 (KS3) domain; sequence ENAIAVVGMA…GTNAHVVLEE (434 aa). Residues C184, H320, and H361 each act as for beta-ketoacyl synthase activity in the active site. The segment at 551 to 868 is acyltransferase; that stretch reads VFLFPGQGAQ…GELWSAGVEV (318 aa). Catalysis depends on S641, which acts as the For malonyltransferase activity. The region spanning 930–1004 is the Carrier domain; sequence NGESQTEVTL…SLTAAVDASF (75 aa). S965 carries the O-(pantetheine 4'-phosphoryl)serine modification. 1286-1331 provides a ligand contact to NADP(+); it reads EGVVAVELEGEGRSVLRPDVDLRRTVGWFTTYYPVPLACATGLGAL.

It depends on NADP(+) as a cofactor. Pantetheine 4'-phosphate serves as cofactor.

It carries out the reaction icosanoyl-[(phenol)carboxyphthiodiolenone synthase] + 2 (S)-methylmalonyl-CoA + 3 malonyl-CoA + 5 NADPH + 10 H(+) = C32-carboxyphthiodiolenone-[(phenol)carboxyphthiodiolenone synthase] + 5 CO2 + 5 NADP(+) + 5 CoA + 2 H2O. It catalyses the reaction docosanoyl-[(phenol)carboxyphthiodiolenone synthase] + 2 (S)-methylmalonyl-CoA + 3 malonyl-CoA + 5 NADPH + 10 H(+) = C34-carboxyphthiodiolenone-[(phenol)carboxyphthiodiolenone synthase] + 5 CO2 + 5 NADP(+) + 5 CoA + 2 H2O. The enzyme catalyses 17-(4-hydroxyphenyl)heptadecanoyl-[(phenol)carboxyphthiodiolenone synthase] + 2 (S)-methylmalonyl-CoA + 3 malonyl-CoA + 5 NADPH + 10 H(+) = C35-(phenol)carboxyphthiodiolenone-[(phenol)carboxyphthiodiolenone synthase] + 5 CO2 + 5 NADP(+) + 5 CoA + 2 H2O. The catalysed reaction is 19-(4-hydroxyphenyl)nonadecanoyl-[(phenol)carboxyphthiodiolenone synthase] + 2 (S)-methylmalonyl-CoA + 3 malonyl-CoA + 5 NADPH + 10 H(+) = C37-(phenol)carboxyphthiodiolenone-[(phenol)carboxyphthiodiolenone synthase] + 5 CO2 + 5 NADP(+) + 5 CoA + 2 H2O. The protein operates within lipid metabolism; fatty acid biosynthesis. Its function is as follows. Part of the PpsABCDE complex involved in the biosynthesis of the lipid core common to phthiocerols and phenolphthiocerols by successive additions of malonyl-CoA or methylmalonyl-CoA extender units. PpsA can accept as substrate the activated forms of either icosanoyl (C20), docosanoyl (C22) or lignoceroyl (C24) groups from FadD26, or a (4-hydroxyphenyl)-C17 or (4-hydroxyphenyl)-C19 fatty acyl from FadD29. PpsA initiates the biosynthesis and extends its substrate using a malonyl-CoA extender unit. The PpsB and PpsC proteins add the second and third malonyl-CoA extender units. PpsD adds an (R)-methylmalonyl unit and PpsE adds a second (R)-methylmalonyl unit. The incorporation of the methylmalonyl units results in formation of two branched methyl groups in the elongated product. The chain is Phenolphthiocerol/phthiocerol polyketide synthase subunit E (ppsE) from Mycobacterium tuberculosis (strain CDC 1551 / Oshkosh).